Here is a 559-residue protein sequence, read N- to C-terminus: Tryprostatin B 6-hydroxylase (559 aa).

Transmembrane regions (helical) follow at residues 13–35 (PSVMKCGYLATAGLIGICTHLSY), 48–65 (YVRFHLCLTMGVAALLYA), and 82–104 (VSLLMATYLVGLFASLLLYRTLF). Heme is bound at residue cysteine 502.

This sequence belongs to the cytochrome P450 family. Requires heme as cofactor.

Its subcellular location is the membrane. It catalyses the reaction tryprostatin B + reduced [NADPH--hemoprotein reductase] + O2 = 6-hydroxytryprostatin B + oxidized [NADPH--hemoprotein reductase] + H2O + H(+). Its pathway is mycotoxin biosynthesis. In terms of biological role, cytochrome P450 monooxygenase; part of the gene cluster that mediates the biosynthesis of fumitremorgins, indole alkaloids that carry not only intriguing chemical structures, but also interesting biological and pharmacological activities. The biosynthesis of fumitremorgin-type alkaloids begins by condensation of the two amino acids L-tryptophan and L-proline to brevianamide F, catalyzed by the non-ribosomal peptide synthetase ftmA. Brevianamide F is then prenylated by the prenyltransferase ftmPT1/ftmB in the presence of dimethylallyl diphosphate, resulting in the formation of tryprostatin B. The three cytochrome P450 monooxygenases, ftmP450-1/ftmC, ftmP450-2/ftmE and ftmP450-3/FtmG, are responsible for the conversion of tryprostatin B to 6-hydroxytryprostatin B, tryprostatin A to fumitremorgin C and fumitremorgin C to 12,13-dihydroxyfumitremorgin C, respectively. The putative methyltransferase ftmMT/ftmD is expected for the conversion of 6-hydroxytryprostatin B to tryprostatin A. FtmPT2/FtmH catalyzes the prenylation of 12,13-dihydroxyfumitre-morgin C in the presence of dimethylallyl diphosphate, resulting in the formation of fumitremorgin B. Fumitremorgin B is further converted to verruculogen by ftmOx1/ftmF via the insertion of an endoperoxide bond between the two prenyl moieties. In some fungal species, verruculogen is further converted to fumitremorgin A, but the enzymes involved in this step have not been identified yet. In Aspergillus fumigatus (Neosartorya fumigata), this protein is Tryprostatin B 6-hydroxylase.